Reading from the N-terminus, the 376-residue chain is MFPKIFLTAATALLSAKSTFAQTYSSCNPLFTTGCPANTALGKSIDVDFTSGSVNSFDGSGDITYDSNGASFTVAKSGDAPTLSSIFYIMFGKVQITMKAAPGAGIVSTLVLQSDDLDEIDMEWLGADDTEVQTNYFGKGKVTDYNRGAFNPAANNQGEFITYTIEWTSEQVVWSVGSTVVRVLTPATADTDQYPQSPMQIKFGAWSGGDSSNAAGTISWARGPTDYSNGPFTMVVQSIDVSDYSTGTQYKYGDQSGDWTSIEAIGGSVNGNVPASASSIQTAGAAAVTSSSPTIPAGINNGNSATRTGYPWVAGTQTVSEVTWSTGPSIPSGWEISSEGKIVPVSASPINISRINPLLLCGPFTFFFFAAIRRWP.

Residues 1-21 (MFPKIFLTAATALLSAKSTFA) form the signal peptide. In terms of domain architecture, GH16 spans 22 to 229 (QTYSSCNPLF…WARGPTDYSN (208 aa)). A disulfide bridge connects residues Cys-27 and Cys-35. Catalysis depends on Glu-119, which acts as the Nucleophile. Glu-123 serves as the catalytic Proton donor. Positions 123, 202, 206, and 217 each coordinate chitin. Ser-346 is lipidated: GPI-anchor amidated serine. Positions 347-376 (ASPINISRINPLLLCGPFTFFFFAAIRRWP) are cleaved as a propeptide — removed in mature form. Asn-351 carries N-linked (GlcNAc...) asparagine glycosylation.

It belongs to the glycosyl hydrolase 16 family. CRH1 subfamily.

Its subcellular location is the cell membrane. The catalysed reaction is Random endo-hydrolysis of N-acetyl-beta-D-glucosaminide (1-&gt;4)-beta-linkages in chitin and chitodextrins.. Its function is as follows. Dual chitinase/transglycosylase that plays a role in cell wall architecture. Chitinase and transglycosylase activities are coupled. Required for the polysaccharide cross-linking at the septa and the cell wall. More specifically, transfers chitin to 1,6-beta-glucan in the cell wall. The sequence is that of Crh-like protein 4 from Botryotinia fuckeliana (strain B05.10) (Noble rot fungus).